A 422-amino-acid polypeptide reads, in one-letter code: MTMGEVEKKPRRRFVGIKKAAEESDPSGSTTELVKKIKPKTNIRHAINQIPPELLNDEELNAAIKLLPSNYNFEIHKTVWNIRKHKAKRVAIQMPEGLLIYSLVISDILEQFCQCEIVVMGDVSYGACCIDDYTARSLDCDFIVHYAHSCLVPIDITTIKVLYIFVTINIDETHLIKTLQKNFPRGSRIAAFGTIQFNPTIHSMKDKLLQSEEHMLYIIPPQIKPLSKGEVLGCTSERLNKEQIDAMVYVGDGRFHLESAMIHNPEIPAFRYDPYNRRFTRERYDQKQLVEVRASAIDKARSSKKVGLILGALGRQGNLATVENLETKLKASGRTVVKIILSEIFPQKLAMFDDIDAFVQVACPRLSIDWGYAFNKPLLTPYETNVMLENDRMFNEKYYPMDYYHINGYGRGKVPNHDDVTI.

3 residues coordinate [4Fe-4S] cluster: C128, C234, and C363.

Belongs to the DPH1/DPH2 family. DPH1 subfamily. Component of the 2-(3-amino-3-carboxypropyl)histidine synthase complex composed of DPH1, DPH2, DPH3 and a NADH-dependent reductase, predominantly CBR1. It depends on [4Fe-4S] cluster as a cofactor.

The protein localises to the cytoplasm. The catalysed reaction is L-histidyl-[translation elongation factor 2] + S-adenosyl-L-methionine = 2-[(3S)-amino-3-carboxypropyl]-L-histidyl-[translation elongation factor 2] + S-methyl-5'-thioadenosine + H(+). It participates in protein modification; peptidyl-diphthamide biosynthesis. Its function is as follows. Catalyzes the first step of diphthamide biosynthesis, a post-translational modification of histidine which occurs in elongation factor 2. DPH1 and DPH2 transfer a 3-amino-3-carboxypropyl (ACP) group from S-adenosyl-L-methionine (SAM) to a histidine residue, the reaction is assisted by a reduction system comprising DPH3 and a NADH-dependent reductase, predominantly CBR1. The protein is 2-(3-amino-3-carboxypropyl)histidine synthase subunit 1 (DPH1) of Kluyveromyces lactis (strain ATCC 8585 / CBS 2359 / DSM 70799 / NBRC 1267 / NRRL Y-1140 / WM37) (Yeast).